A 159-amino-acid chain; its full sequence is Sperm acrosome-associated protein 5 (159 aa).

Positions 1-21 are cleaved as a signal peptide; sequence MKAWGTVVVTLATLMVVTVDA. Residues 22 to 150 form the C-type lysozyme domain; it reads KIYERCELAA…SEWLKGCDMH (129 aa). 4 cysteine pairs are disulfide-bonded: Cys27/Cys147, Cys51/Cys135, Cys85/Cys100, and Cys96/Cys114. Glu56 is an active-site residue.

The protein belongs to the glycosyl hydrolase 22 family.

It is found in the secreted. The enzyme catalyses Hydrolysis of (1-&gt;4)-beta-linkages between N-acetylmuramic acid and N-acetyl-D-glucosamine residues in a peptidoglycan and between N-acetyl-D-glucosamine residues in chitodextrins.. The protein is Sperm acrosome-associated protein 5 (SPACA5) of Homo sapiens (Human).